The following is a 265-amino-acid chain: Secreted RxLR effector protein 16 (265 aa).

The N-terminal stretch at 1 to 19 (MRGAFYIAIALLIVRSRTA) is a signal peptide. The RxLR-dEER motif lies at 46 to 61 (RYLRGGLALSATNEER). Residues asparagine 170, asparagine 219, and asparagine 240 are each glycosylated (N-linked (GlcNAc...) asparagine).

It belongs to the RxLR effector family. In terms of processing, N-glycosylated. The putative N-glycosylation site at position 240 is essential for cell death-inducing activity.

The protein resides in the secreted. It is found in the host nucleus. Functionally, effector that acts as an elicitor that induces cell death and promotes ROS accumulation in Nicotian benthamiana. RxLR16-triggered cell death is dependent on SGT1, HSP90 and RAR1, but independent of the somatic embryogenesis receptor-like kinase SERK3/BAK1, indicating that it acts independently of the detection of cell surface pattern recognition receptors. Enhances the expressional levels of defense-associated genes involved in the salicylic acid-, jasmonate acid-, and ethylene-mediated signal transduction, resulting in disease resistance. However, as some other Plasmopara viticola RxLR effectors including RxLR1, RxLR10, RxLR30 and RxLR25, can suppress defense responses and disease resistance induced by RxLR16, it may not trigger host cell death or immune responses during physiological infection under natural conditions. The polypeptide is Secreted RxLR effector protein 16 (Plasmopara viticola (Downy mildew of grapevine)).